Consider the following 309-residue polypeptide: MITFLPIIFSSLVVVTFVIGNFANGFIALVNSIEWFKRQKISFADQILTALAVSRVGLLWVLLLNWYLTVLNPAFNSVEVRTTAYNIWAVINHFSNWLATSLSIFYLLKIANFSNFIFLHLKRRVKSVILVMLLGPLLFLACHLFMINMNEIVRTKEFDGNMTWKIKLKSAMYFSNMTVTMVANLVPFTLTLLSFLLLICSLCKHLKKMQLHGKGSQDPSTKVHIKALQTVISFLLLCAIYFLSIMISVWSFGSLENKPVFMFCKAIRFSYPSIHPFILIWGNKKLKQTFLSVFWQMRYWVKGEKTSSP.

Residue Met-1 is a topological domain, extracellular. The helical transmembrane segment at 2–22 (ITFLPIIFSSLVVVTFVIGNF) threads the bilayer. At 23-46 (ANGFIALVNSIEWFKRQKISFADQ) the chain is on the cytoplasmic side. The helical transmembrane segment at 47-67 (ILTALAVSRVGLLWVLLLNWY) threads the bilayer. Topologically, residues 68-86 (LTVLNPAFNSVEVRTTAYN) are extracellular. Residues 87–107 (IWAVINHFSNWLATSLSIFYL) traverse the membrane as a helical segment. Residues 108–126 (LKIANFSNFIFLHLKRRVK) are Cytoplasmic-facing. Residues 127 to 147 (SVILVMLLGPLLFLACHLFMI) traverse the membrane as a helical segment. Topologically, residues 148–178 (NMNEIVRTKEFDGNMTWKIKLKSAMYFSNMT) are extracellular. 2 N-linked (GlcNAc...) asparagine glycosylation sites follow: Asn-161 and Asn-176. Residues 179-199 (VTMVANLVPFTLTLLSFLLLI) form a helical membrane-spanning segment. Over 200-229 (CSLCKHLKKMQLHGKGSQDPSTKVHIKALQ) the chain is Cytoplasmic. The helical transmembrane segment at 230-250 (TVISFLLLCAIYFLSIMISVW) threads the bilayer. Topologically, residues 251-259 (SFGSLENKP) are extracellular. Residues 260-280 (VFMFCKAIRFSYPSIHPFILI) traverse the membrane as a helical segment. Residues 281 to 309 (WGNKKLKQTFLSVFWQMRYWVKGEKTSSP) lie on the Cytoplasmic side of the membrane.

This sequence belongs to the G-protein coupled receptor T2R family.

The protein localises to the membrane. The protein resides in the cell projection. It localises to the cilium membrane. Gustducin-coupled receptor immplicated in the perception of bitter compounds in the oral cavity and the gastrointestinal tract. Signals through PLCB2 and the calcium-regulated cation channel TRPM5. Activated by the sulfonyl amide sweeteners saccharin and acesulfame K. In airway epithelial cells, binding of bitter compounds increases the intracellular calcium ion concentration and stimulates ciliary beat frequency. May act as chemosensory receptors in airway epithelial cells to detect and eliminate potential noxious agents from the airways. This is Taste receptor type 2 member 43 (TAS2R43) from Pan paniscus (Pygmy chimpanzee).